We begin with the raw amino-acid sequence, 132 residues long: Large ribosomal subunit protein bL17 (132 aa).

This sequence belongs to the bacterial ribosomal protein bL17 family. Part of the 50S ribosomal subunit. Contacts protein L32.

This Saccharophagus degradans (strain 2-40 / ATCC 43961 / DSM 17024) protein is Large ribosomal subunit protein bL17.